Here is an 83-residue protein sequence, read N- to C-terminus: Short neurotoxin B (83 aa).

An N-terminal signal peptide occupies residues Met-1 to Thr-21. 4 cysteine pairs are disulfide-bonded: Cys-24/Cys-45, Cys-38/Cys-62, Cys-64/Cys-75, and Cys-76/Cys-81.

Belongs to the three-finger toxin family. Short-chain subfamily. Type I alpha-neurotoxin sub-subfamily. Expressed by the venom gland.

The protein resides in the secreted. In terms of biological role, binds to muscle nicotinic acetylcholine receptor (nAChR) and inhibit acetylcholine from binding to the receptor, thereby impairing neuromuscular transmission. The chain is Short neurotoxin B from Laticauda laticaudata (Blue-ringed sea krait).